Here is a 127-residue protein sequence, read N- to C-terminus: MIKKNWITTGTEARALAQNISMSAYKARRVIDQIRGRSYEETIMILELMPYRASFPILKLVYSAAANAINNMGLSEADLFISKAEVNGGTFVKKLRPRARGRSYAIKRPTCHITIVLKDKDKSLLNE.

This sequence belongs to the universal ribosomal protein uL22 family. In terms of assembly, part of the 50S ribosomal subunit.

The protein resides in the plastid. It localises to the chloroplast. In terms of biological role, this protein binds specifically to 23S rRNA. The globular domain of the protein is located near the polypeptide exit tunnel on the outside of the subunit, while an extended beta-hairpin is found that lines the wall of the exit tunnel in the center of the 70S ribosome. In Acorus calamus var. americanus (American sweet flag), this protein is Large ribosomal subunit protein uL22c (rpl22).